The following is a 2528-amino-acid chain: Reducing polyketide synthase PKS1 (2528 aa).

Positions 11 to 436 constitute a Ketosynthase family 3 (KS3) domain; that stretch reads ITPIAVVGMS…GANVHAILES (426 aa). Catalysis depends on for beta-ketoacyl synthase activity residues Cys-186, His-321, and His-359. A malonyl-CoA:ACP transacylase (MAT) region spans residues 573–868; the sequence is FVFTGQGAQW…LGGPISQVID (296 aa). Positions 954 to 1092 are N-terminal hotdog fold; it reads LDLIGVFDVH…GLISVLKSSK (139 aa). The 325-residue stretch at 954–1278 folds into the PKS/mFAS DH domain; sequence LDLIGVFDVH…LVALDRPNSS (325 aa). The interval 956–1277 is dehydratase (DH) domain; that stretch reads LIGVFDVHSS…TLVALDRPNS (322 aa). His-986 (proton acceptor; for dehydratase activity) is an active-site residue. Positions 1122–1278 are C-terminal hotdog fold; sequence KTEWDVKDMY…LVALDRPNSS (157 aa). Asp-1187 acts as the Proton donor; for dehydratase activity in catalysis. The interval 1827–2139 is enoyl reductase (ER) domain; sequence GLLDSLHFTV…TGRHMGKMVA (313 aa). Positions 2164–2341 are ketoreductase (KR) domain; that stretch reads ASYLLVGGVG…ATVIDIGAVH (178 aa). A Carrier domain is found at 2442–2519; sequence SAVTIVLSAL…ALAVKIAARS (78 aa). Residue Ser-2479 is modified to O-(pantetheine 4'-phosphoryl)serine.

It functions in the pathway mycotoxin biosynthesis. Functionally, reducing polyketide synthase (PKS); part of the Tox1A locus, one of the 2 loci that mediate the biosynthesis of T-toxin, a family of linear polyketides 37 to 45 carbons in length, of which the major component is 41 carbons, and which leads to high virulence to maize. One of the PKSs (PKS1 or PKS2) could synthesize a precursor, used subsequently by the other PKS as starter unit, to add additional carbons. Variability in the length of the final carbon backbone C35-47 could be achieved by varying the number of condensation cycles, or use of different starter or extender units or might be due to decarboxylation of the penultimate product, catalyzed by DEC1. Additional proteins are required for the biosynthesis of T-toxin, including oxidoreductases RED1, RED2, RED3, LAM1 and OXI1, as well as esterase TOX9. In Cochliobolus heterostrophus (strain C4 / ATCC 48331 / race T) (Southern corn leaf blight fungus), this protein is Reducing polyketide synthase PKS1.